Here is a 288-residue protein sequence, read N- to C-terminus: ATP synthase gamma chain (288 aa).

Belongs to the ATPase gamma chain family. As to quaternary structure, F-type ATPases have 2 components, CF(1) - the catalytic core - and CF(0) - the membrane proton channel. CF(1) has five subunits: alpha(3), beta(3), gamma(1), delta(1), epsilon(1). CF(0) has three main subunits: a, b and c.

It is found in the cell inner membrane. Its function is as follows. Produces ATP from ADP in the presence of a proton gradient across the membrane. The gamma chain is believed to be important in regulating ATPase activity and the flow of protons through the CF(0) complex. This is ATP synthase gamma chain from Rickettsia felis (strain ATCC VR-1525 / URRWXCal2) (Rickettsia azadi).